The sequence spans 59 residues: Photosystem II reaction center protein K (59 aa).

Residues 1–22 constitute a propeptide that is removed on maturation; the sequence is MLNIFSLICLNSDLYSSRFFLA. The chain crosses the membrane as a helical span at residues 38-58; it reads MPVIPLFFLLLAFVWQAAVSF.

This sequence belongs to the PsbK family. As to quaternary structure, PSII is composed of 1 copy each of membrane proteins PsbA, PsbB, PsbC, PsbD, PsbE, PsbF, PsbH, PsbI, PsbJ, PsbK, PsbL, PsbM, PsbT, PsbX, PsbY, PsbZ, Psb30/Ycf12, at least 3 peripheral proteins of the oxygen-evolving complex and a large number of cofactors. It forms dimeric complexes.

It is found in the plastid. The protein localises to the chloroplast thylakoid membrane. In terms of biological role, one of the components of the core complex of photosystem II (PSII). PSII is a light-driven water:plastoquinone oxidoreductase that uses light energy to abstract electrons from H(2)O, generating O(2) and a proton gradient subsequently used for ATP formation. It consists of a core antenna complex that captures photons, and an electron transfer chain that converts photonic excitation into a charge separation. This is Photosystem II reaction center protein K from Oenothera elata subsp. hookeri (Hooker's evening primrose).